The chain runs to 137 residues: Putative pre-16S rRNA nuclease (137 aa).

This sequence belongs to the YqgF nuclease family.

The protein resides in the cytoplasm. Could be a nuclease involved in processing of the 5'-end of pre-16S rRNA. This chain is Putative pre-16S rRNA nuclease, found in Bacillus cereus (strain AH187).